The primary structure comprises 171 residues: Orotate phosphoribosyltransferase (171 aa).

Residues R85, K86, R88, H90, and 110 to 118 (EDVVTTGNS) contribute to the 5-phospho-alpha-D-ribose 1-diphosphate site. The orotate site is built by T114 and R142.

The protein belongs to the purine/pyrimidine phosphoribosyltransferase family. PyrE subfamily. As to quaternary structure, homodimer. Mg(2+) serves as cofactor.

It carries out the reaction orotidine 5'-phosphate + diphosphate = orotate + 5-phospho-alpha-D-ribose 1-diphosphate. It participates in pyrimidine metabolism; UMP biosynthesis via de novo pathway; UMP from orotate: step 1/2. Its function is as follows. Catalyzes the transfer of a ribosyl phosphate group from 5-phosphoribose 1-diphosphate to orotate, leading to the formation of orotidine monophosphate (OMP). This chain is Orotate phosphoribosyltransferase, found in Thermoplasma acidophilum (strain ATCC 25905 / DSM 1728 / JCM 9062 / NBRC 15155 / AMRC-C165).